We begin with the raw amino-acid sequence, 419 residues long: Serine hydroxymethyltransferase (419 aa).

(6S)-5,6,7,8-tetrahydrofolate contacts are provided by residues L121 and 125–127; that span reads GHL. K229 carries the post-translational modification N6-(pyridoxal phosphate)lysine. 354–356 lines the (6S)-5,6,7,8-tetrahydrofolate pocket; the sequence is SPF.

The protein belongs to the SHMT family. In terms of assembly, homodimer. The cofactor is pyridoxal 5'-phosphate.

It localises to the cytoplasm. The catalysed reaction is (6R)-5,10-methylene-5,6,7,8-tetrahydrofolate + glycine + H2O = (6S)-5,6,7,8-tetrahydrofolate + L-serine. The protein operates within one-carbon metabolism; tetrahydrofolate interconversion. It participates in amino-acid biosynthesis; glycine biosynthesis; glycine from L-serine: step 1/1. Functionally, catalyzes the reversible interconversion of serine and glycine with tetrahydrofolate (THF) serving as the one-carbon carrier. This reaction serves as the major source of one-carbon groups required for the biosynthesis of purines, thymidylate, methionine, and other important biomolecules. Also exhibits THF-independent aldolase activity toward beta-hydroxyamino acids, producing glycine and aldehydes, via a retro-aldol mechanism. This chain is Serine hydroxymethyltransferase, found in Coxiella burnetii (strain CbuG_Q212) (Coxiella burnetii (strain Q212)).